Reading from the N-terminus, the 328-residue chain is Pleckstrin homology domain protein OPY1 (328 aa).

The segment at 19–52 (NLIKKPSTSQNKTPTAQSSSGNNGAADGAPQGYH) is disordered. The span at 24–41 (PSTSQNKTPTAQSSSGNN) shows a compositional bias: polar residues. A required for targeting to the cell membrane region spans residues 213–328 (AEHQVCSGIL…IRKKLKAENI (116 aa)). Positions 215–318 (HQVCSGILYT…WIINFKSGIL (104 aa)) constitute a PH domain.

Interacts with MSS4 (via N-terminus); to negatively regulate MSS4 kinase activity.

The protein localises to the cell membrane. Its subcellular location is the cytoplasm. In terms of biological role, binds phosphatidylinositol 4,5-bisphosphate (PtdIns(4,5)P2/PIP2) at the cell membrane. Negatively regulates the activity of phosphatidylinositol 4-phosphate 5-kinase MSS4. This is Pleckstrin homology domain protein OPY1 (OPY1) from Saccharomyces cerevisiae (strain ATCC 204508 / S288c) (Baker's yeast).